The sequence spans 134 residues: Large-conductance mechanosensitive channel (134 aa).

Helical transmembrane passes span 16 to 36 (VIDL…VTAL) and 81 to 101 (GDFL…FIIV).

Belongs to the MscL family. In terms of assembly, homopentamer.

The protein resides in the cell inner membrane. In terms of biological role, channel that opens in response to stretch forces in the membrane lipid bilayer. May participate in the regulation of osmotic pressure changes within the cell. This Xylella fastidiosa (strain M12) protein is Large-conductance mechanosensitive channel.